Reading from the N-terminus, the 202-residue chain is MDPQLPEPEPLIALIEALRRLPGVGVRSARRMAYHLLQHDLQGADMLGRALSAAVQHLRHCARCNSFTEDEVCATCANPKRDPGLLCIVETPADQNMIESSHGYRGLYYVLMGRIAPLEGVGPRELDFQRVIERACDGVVQEVILATNFTAEGETTAHFLDDALSERGLKVTRLARGVPAGSELEYVDAGTIAWALMERRST.

The C4-type zinc-finger motif lies at 61–76 (CARCNSFTEDEVCATC). Residues 84 to 179 (GLLCIVETPA…KVTRLARGVP (96 aa)) form the Toprim domain.

Belongs to the RecR family.

May play a role in DNA repair. It seems to be involved in an RecBC-independent recombinational process of DNA repair. It may act with RecF and RecO. This Bordetella pertussis (strain Tohama I / ATCC BAA-589 / NCTC 13251) protein is Recombination protein RecR.